We begin with the raw amino-acid sequence, 96 residues long: Co-chaperonin GroES (96 aa).

This sequence belongs to the GroES chaperonin family. In terms of assembly, heptamer of 7 subunits arranged in a ring. Interacts with the chaperonin GroEL.

The protein resides in the cytoplasm. Its function is as follows. Together with the chaperonin GroEL, plays an essential role in assisting protein folding. The GroEL-GroES system forms a nano-cage that allows encapsulation of the non-native substrate proteins and provides a physical environment optimized to promote and accelerate protein folding. GroES binds to the apical surface of the GroEL ring, thereby capping the opening of the GroEL channel. This is Co-chaperonin GroES from Shewanella oneidensis (strain ATCC 700550 / JCM 31522 / CIP 106686 / LMG 19005 / NCIMB 14063 / MR-1).